Reading from the N-terminus, the 605-residue chain is Exonuclease V, mitochondrial (605 aa).

The N-terminal 17 residues, 1–17 (MSLNFLKRYLSRSTRNF), are a transit peptide targeting the mitochondrion. 4 residues coordinate [4Fe-4S] cluster: cysteine 140, cysteine 563, cysteine 566, and cysteine 572.

This sequence belongs to the EXO5 family. As to quaternary structure, monomer. Mg(2+) serves as cofactor. It depends on [4Fe-4S] cluster as a cofactor.

Its subcellular location is the mitochondrion. Its function is as follows. Single strand DNA specific 5' exonuclease involved in mitochondrial DNA replication and recombination. Releases dinucleotides as main products of catalysis. Has the capacity to slide across 5'double-stranded DNA or 5'RNA sequences and resumes cutting two nucleotides downstream of the double-stranded-to-single-stranded junction or RNA-to-DNA junction, respectively. This chain is Exonuclease V, mitochondrial (EXO5), found in Candida tropicalis (strain ATCC MYA-3404 / T1) (Yeast).